A 248-amino-acid polypeptide reads, in one-letter code: Small ribosomal subunit protein uS3 (248 aa).

A KH type-2 domain is found at 39–108 (IRKLVSQKLA…TVAVNVAEIP (70 aa)). Residues 212-248 (KTETLARPPRKSDERRREDGERPSRRRPTARRRPGGE) are disordered. The span at 221 to 234 (RKSDERRREDGERP) shows a compositional bias: basic and acidic residues. Positions 235 to 248 (SRRRPTARRRPGGE) are enriched in basic residues.

The protein belongs to the universal ribosomal protein uS3 family. Part of the 30S ribosomal subunit. Forms a tight complex with proteins S10 and S14.

Functionally, binds the lower part of the 30S subunit head. Binds mRNA in the 70S ribosome, positioning it for translation. In Deinococcus geothermalis (strain DSM 11300 / CIP 105573 / AG-3a), this protein is Small ribosomal subunit protein uS3.